The chain runs to 468 residues: Dihydrolipoyl dehydrogenase (468 aa).

FAD contacts are provided by residues 39 to 47 (EKGNLGGVC), lysine 56, and alanine 119. An intrachain disulfide couples cysteine 47 to cysteine 52. Residues 183 to 187 (GGGYI), glutamate 206, and 271 to 274 (TVGR) each bind NAD(+). 2 residues coordinate FAD: aspartate 314 and alanine 322. The active-site Proton acceptor is histidine 446.

It belongs to the class-I pyridine nucleotide-disulfide oxidoreductase family. As to quaternary structure, homodimer. FAD is required as a cofactor.

Its subcellular location is the cytoplasm. The protein resides in the membrane. The enzyme catalyses N(6)-[(R)-dihydrolipoyl]-L-lysyl-[protein] + NAD(+) = N(6)-[(R)-lipoyl]-L-lysyl-[protein] + NADH + H(+). Its function is as follows. Lipoamide dehydrogenase is a component of the alpha-ketoacid dehydrogenase complexes. The protein is Dihydrolipoyl dehydrogenase (pdhD) of Staphylococcus aureus (strain COL).